A 238-amino-acid polypeptide reads, in one-letter code: Ribonuclease PH (238 aa).

Residues Arg86 and 124–126 each bind phosphate; that span reads GTR.

It belongs to the RNase PH family. As to quaternary structure, homohexameric ring arranged as a trimer of dimers.

The catalysed reaction is tRNA(n+1) + phosphate = tRNA(n) + a ribonucleoside 5'-diphosphate. Phosphorolytic 3'-5' exoribonuclease that plays an important role in tRNA 3'-end maturation. Removes nucleotide residues following the 3'-CCA terminus of tRNAs; can also add nucleotides to the ends of RNA molecules by using nucleoside diphosphates as substrates, but this may not be physiologically important. Probably plays a role in initiation of 16S rRNA degradation (leading to ribosome degradation) during starvation. The sequence is that of Ribonuclease PH from Geobacter metallireducens (strain ATCC 53774 / DSM 7210 / GS-15).